Here is a 448-residue protein sequence, read N- to C-terminus: Portal protein (448 aa).

The disordered stretch occupies residues M1–K25.

It belongs to the P23virus portal protein family. In terms of assembly, homododecamer. Interacts with the capsid protein. Interacts with the terminase large subunit; this interaction allows the packaging of viral DNA.

The protein resides in the virion. Its function is as follows. Forms the portal vertex of the capsid. This portal plays critical roles in head assembly, genome packaging, neck/tail attachment, and genome ejection. The portal protein multimerizes as a single ring-shaped homododecamer arranged around a central channel. Forms the portal vertex of the capsid. This portal plays critical roles in head assembly, genome packaging, neck/tail attachment, and genome ejection. In Thermus thermophilus (Thermus thermophilus phage P23-45), this protein is Portal protein.